A 363-amino-acid polypeptide reads, in one-letter code: S-methylmethionine--homocysteine S-methyltransferase BHMT2 (363 aa).

One can recognise a Hcy-binding domain in the interval 11 to 305; sequence KVILERLDSG…YHIRAIAEEL (295 aa). Zn(2+) is bound by residues C208, C290, and C291.

Homotetramer. Zn(2+) is required as a cofactor.

The catalysed reaction is S-methyl-L-methionine + L-homocysteine = 2 L-methionine + H(+). It functions in the pathway amino-acid biosynthesis; L-methionine biosynthesis via de novo pathway; L-methionine from L-homocysteine (BhmT route): step 1/1. Involved in the regulation of homocysteine metabolism. Converts betaine and homocysteine to dimethylglycine and methionine, respectively. This reaction is also required for the irreversible oxidation of choline. This chain is S-methylmethionine--homocysteine S-methyltransferase BHMT2 (Bhmt2), found in Rattus norvegicus (Rat).